The following is a 107-amino-acid chain: Phosphoribosyl-ATP pyrophosphatase (107 aa).

The protein belongs to the PRA-PH family.

It is found in the cytoplasm. It carries out the reaction 1-(5-phospho-beta-D-ribosyl)-ATP + H2O = 1-(5-phospho-beta-D-ribosyl)-5'-AMP + diphosphate + H(+). It functions in the pathway amino-acid biosynthesis; L-histidine biosynthesis; L-histidine from 5-phospho-alpha-D-ribose 1-diphosphate: step 2/9. In Nitrobacter hamburgensis (strain DSM 10229 / NCIMB 13809 / X14), this protein is Phosphoribosyl-ATP pyrophosphatase.